The sequence spans 42 residues: Perlinhibin-related protein (42 aa).

In terms of processing, contains four disulfide bonds.

Its function is as follows. Inhibitor of shell growth. This chain is Perlinhibin-related protein, found in Haliotis laevigata (Smooth Australian abalone).